The primary structure comprises 457 residues: Mannose-6-phosphate isomerase (457 aa).

Zn(2+) contacts are provided by Q108, H110, E135, and H292. The active site involves R311.

It belongs to the mannose-6-phosphate isomerase type 1 family. Zn(2+) serves as cofactor.

It is found in the cytoplasm. It catalyses the reaction D-mannose 6-phosphate = D-fructose 6-phosphate. It participates in nucleotide-sugar biosynthesis; GDP-alpha-D-mannose biosynthesis; alpha-D-mannose 1-phosphate from D-fructose 6-phosphate: step 1/2. Involved in the synthesis of the GDP-mannose and dolichol-phosphate-mannose required for a number of critical mannosyl transfer reactions. This chain is Mannose-6-phosphate isomerase (pmi1), found in Aspergillus fumigatus (strain ATCC MYA-4609 / CBS 101355 / FGSC A1100 / Af293) (Neosartorya fumigata).